The chain runs to 156 residues: Large ribosomal subunit protein uL15 (156 aa).

A compositionally biased stretch (basic and acidic residues) spans 1–11 (MKLNDLRDKPG). Residues 1 to 44 (MKLNDLRDKPGSVKARKRVGRGIGSGTGKTGGRGVKGQKSRSGV) are disordered. A compositionally biased stretch (gly residues) spans 21–35 (RGIGSGTGKTGGRGV).

It belongs to the universal ribosomal protein uL15 family. As to quaternary structure, part of the 50S ribosomal subunit.

Functionally, binds to the 23S rRNA. This is Large ribosomal subunit protein uL15 from Brucella abortus (strain S19).